Consider the following 107-residue polypeptide: Thioredoxin-1 (107 aa).

The Thioredoxin domain occupies 2–106 (ASVRTMTDFH…LTNMMAKLVK (105 aa)). Active-site nucleophile residues include cysteine 31 and cysteine 34. An intrachain disulfide couples cysteine 31 to cysteine 34.

Belongs to the thioredoxin family.

Its subcellular location is the nucleus. Functionally, participates in various redox reactions through the reversible oxidation of its active center dithiol to a disulfide and catalyzes dithiol-disulfide exchange reactions. As a reducing substrate of peroxiredoxin 1, thioredoxin 2 is preferred over thioredoxin 1. Required for female meiosis and early embryonic development. This Drosophila yakuba (Fruit fly) protein is Thioredoxin-1 (dhd).